The following is a 268-amino-acid chain: Undecaprenyl-diphosphatase (268 aa).

7 consecutive transmembrane segments (helical) span residues 47 to 67 (FAVLIQLGAILAILALYFSKL), 85 to 105 (IGVLVAFLPAAVIGAASGGLI), 109 to 129 (LFNPWVVCFTLILGGGILLWV), 144 to 164 (FPLPMYLIIGFAQCIAMFPGV), 184 to 204 (AAEFSFFLAIPTMLGAFVYDL), 217 to 237 (LIVAVGFAVSFITAIIVVKTF), and 246 to 266 (FALFAWWRVIVGTLGLIALAL).

It belongs to the UppP family.

Its subcellular location is the cell inner membrane. The enzyme catalyses di-trans,octa-cis-undecaprenyl diphosphate + H2O = di-trans,octa-cis-undecaprenyl phosphate + phosphate + H(+). Catalyzes the dephosphorylation of undecaprenyl diphosphate (UPP). Confers resistance to bacitracin. The polypeptide is Undecaprenyl-diphosphatase (Rhodopseudomonas palustris (strain BisA53)).